The sequence spans 592 residues: Serine/threonine-protein kinase ksg1 (592 aa).

The span at 1 to 10 shows a compositional bias: polar residues; it reads MRNTHNPNET. The segment at 1 to 92 is disordered; sequence MRNTHNPNET…NPSSGASTPN (92 aa). Over residues 11 to 22 the composition is skewed to acidic residues; that stretch reads EASEDAENDTQS. Over residues 27 to 37 the composition is skewed to basic and acidic residues; it reads SFDHGSSEKLN. The segment covering 42–68 has biased composition (polar residues); sequence PKTQNSAIPQSNALNTTPNESTSQIDS. Phosphoserine occurs at positions 64 and 69. Polar residues predominate over residues 80–92; that stretch reads STPNPSSGASTPN. One can recognise a Protein kinase domain in the interval 99–366; the sequence is FKFGEILGEG…VDEIHQHPFF (268 aa). Residues 109 to 111 and Lys128 contribute to the ATP site; that span reads SYS. Residues 130 to 175 are PIF-pocket; sequence LDKRHIIKEKKEKYVNIEKEALCILSKHPGFIKLFYTFQDAHNLYF. Residues 178 to 180 and Glu184 each bind ATP; that span reads SLA. Residue Asp223 is the Proton acceptor of the active site. Residues Glu227 and Asp241 each coordinate ATP. Positions 461–572 constitute a PH domain; that stretch reads ISKIGTLNVY…ELLDKASSIS (112 aa).

The protein belongs to the protein kinase superfamily. AGC Ser/Thr protein kinase family. PDPK1 subfamily.

It is found in the cytoplasm. It catalyses the reaction L-seryl-[protein] + ATP = O-phospho-L-seryl-[protein] + ADP + H(+). The catalysed reaction is L-threonyl-[protein] + ATP = O-phospho-L-threonyl-[protein] + ADP + H(+). In terms of biological role, involved in the control of sexual development and cell growth under stressed conditions. Phosphorylates AGC kinase gad8 at 'Thr-387', activating gad8 kinase activity and promoting sexual development. Phosphorylates AGC kinase psk1 at 'Ser-248', activating psk1 kinase activity and promoting phosphorylation of ribosomal protein S6. The chain is Serine/threonine-protein kinase ksg1 from Schizosaccharomyces pombe (strain 972 / ATCC 24843) (Fission yeast).